The chain runs to 879 residues: Aminopeptidase M1 (879 aa).

The tract at residues 98-205 is required for membrane association; it reads HGVGVLKLGF…MSTYLVAIVV (108 aa). Substrate contacts are provided by residues glutamate 138 and 271-275; that span reads GAMEN. Histidine 307 is a Zn(2+) binding site. Residue glutamate 308 is the Proton acceptor of the active site. Zn(2+) contacts are provided by histidine 311 and glutamate 330. Positions 728 to 729 match the Dileucine internalization motif motif; the sequence is LL.

It belongs to the peptidase M1 family. As to quaternary structure, homodimer. Interacts with N-1-naphthylphthalamic acid (NPA). The cofactor is Zn(2+). Ubiquitous with preferential expression in 5 days-old seedlings, roots, young flowers, upper inflorescence stems, and rosette leaves.

It is found in the membrane. The protein localises to the microsome membrane. The protein resides in the cytoplasm. It catalyses the reaction Release of an N-terminal amino acid, Xaa-|-Yaa- from a peptide, amide or arylamide. Xaa is preferably Ala, but may be most amino acids including Pro (slow action). When a terminal hydrophobic residue is followed by a prolyl residue, the two may be released as an intact Xaa-Pro dipeptide.. Its function is as follows. Metallopeptidase that binds to the auxin transport inhibitor N-1-naphthylphthalamic acid (NPA). Required for embryonic and seedling development as well as cell cycle progression. Homodimerization is required to proper localization and activity. May play a negative role in the regulation of PIN auxin transport proteins. This Arabidopsis thaliana (Mouse-ear cress) protein is Aminopeptidase M1 (APM1).